A 451-amino-acid polypeptide reads, in one-letter code: Magnesium transporter MgtE (451 aa).

Over 1-285 (MVQNMTYDEL…TKAYVAAYRR (285 aa)) the chain is Cytoplasmic. Residues Asp-64 and Asp-96 each coordinate Mg(2+). 2 CBS domains span residues 140-203 (MTNR…VQDL) and 204-260 (MFTR…EADE). Mg(2+) is bound by residues Glu-218, Asp-228, Asp-249, Asp-252, Glu-257, Glu-260, and Asp-261. Residues 286–306 (LPWLILLLFIGLISGSIISYF) form a helical membrane-spanning segment. Topologically, residues 307–311 (EDALK) are extracellular. A helical membrane pass occupies residues 312–332 (QVVALAFFMPMVSGMTGNTGT). Residues 333–371 (QSLAVVIRGLSKEEMNKKTIVRLIFREFRTSIFIGAVCS) lie on the Cytoplasmic side of the membrane. Helical transmembrane passes span 372-392 (VLIA…FVVA) and 393-413 (SSLF…PIIL). The Cytoplasmic portion of the chain corresponds to 414–427 (HKLKVDPAIASGPL). 2 residues coordinate Mg(2+): Asp-419 and Asp-433. The helical transmembrane segment at 428-448 (ITTLNDILSLLIYFGIATAFI) threads the bilayer. Residues 449–451 (HSL) lie on the Extracellular side of the membrane.

Belongs to the SLC41A transporter family. Homodimer.

It is found in the cell membrane. It carries out the reaction Mg(2+)(in) = Mg(2+)(out). With respect to regulation, binds cyclic di-AMP (c-di-AMP), which may regulate the transporter activity. Its function is as follows. Acts as a magnesium transporter. MgtE is the dominant transporter under rich-medium growth conditions, and it may provide the primary route of magnesium import in B.subtilis, while the other putative transport proteins are likely to be utilized for more-specialized growth conditions. The polypeptide is Magnesium transporter MgtE (Bacillus subtilis (strain 168)).